The chain runs to 207 residues: Large ribosomal subunit protein uL4 (207 aa).

The disordered stretch occupies residues 49 to 73 (AKKRGEVSGGGKKPWKQKGGGRARA).

Belongs to the universal ribosomal protein uL4 family. In terms of assembly, part of the 50S ribosomal subunit.

In terms of biological role, one of the primary rRNA binding proteins, this protein initially binds near the 5'-end of the 23S rRNA. It is important during the early stages of 50S assembly. It makes multiple contacts with different domains of the 23S rRNA in the assembled 50S subunit and ribosome. Functionally, forms part of the polypeptide exit tunnel. This chain is Large ribosomal subunit protein uL4, found in Helicobacter hepaticus (strain ATCC 51449 / 3B1).